The following is a 284-amino-acid chain: MQLIEKAPAKINLGLDTPYHHQDGAEEWNMVMTSVDLADYVEIQTLTKHKRIRVASDSGFLPNDQRNLAFQAAHLLQTNYGIDEGVNIRIKKNIPVAAGLGGGSSDAAAVLRGLNQLWSLGLSWQELAELGLQIDSDVPYCVYGRTAHVRGRGERITPLSKLPAAWVVLAKPKVSVSTPSILQQIQYDHLEHPDIDGLLRAIREQDIQGMCAVMGNALEPLTAHRYPEITQIKQQMMKFGADAAQMSGTGPTVFGLCSKQSRAQRVFNGMKGFCREVYLVRPLP.

The active site involves K10. ATP is bound at residue 95–105 (PVAAGLGGGSS). Residue D137 is part of the active site.

This sequence belongs to the GHMP kinase family. IspE subfamily.

It carries out the reaction 4-CDP-2-C-methyl-D-erythritol + ATP = 4-CDP-2-C-methyl-D-erythritol 2-phosphate + ADP + H(+). Its pathway is isoprenoid biosynthesis; isopentenyl diphosphate biosynthesis via DXP pathway; isopentenyl diphosphate from 1-deoxy-D-xylulose 5-phosphate: step 3/6. Its function is as follows. Catalyzes the phosphorylation of the position 2 hydroxy group of 4-diphosphocytidyl-2C-methyl-D-erythritol. The polypeptide is 4-diphosphocytidyl-2-C-methyl-D-erythritol kinase (Levilactobacillus brevis (strain ATCC 367 / BCRC 12310 / CIP 105137 / JCM 1170 / LMG 11437 / NCIMB 947 / NCTC 947) (Lactobacillus brevis)).